The sequence spans 344 residues: tRNA N6-adenosine threonylcarbamoyltransferase (344 aa).

Fe cation is bound by residues His-113 and His-117. Substrate contacts are provided by residues 135 to 139 (LVSGG), Asp-169, Gly-182, Asp-186, and Asn-278. Fe cation is bound at residue Asp-306.

It belongs to the KAE1 / TsaD family. Fe(2+) is required as a cofactor.

The protein localises to the cytoplasm. The catalysed reaction is L-threonylcarbamoyladenylate + adenosine(37) in tRNA = N(6)-L-threonylcarbamoyladenosine(37) in tRNA + AMP + H(+). Functionally, required for the formation of a threonylcarbamoyl group on adenosine at position 37 (t(6)A37) in tRNAs that read codons beginning with adenine. Is involved in the transfer of the threonylcarbamoyl moiety of threonylcarbamoyl-AMP (TC-AMP) to the N6 group of A37, together with TsaE and TsaB. TsaD likely plays a direct catalytic role in this reaction. In Corynebacterium efficiens (strain DSM 44549 / YS-314 / AJ 12310 / JCM 11189 / NBRC 100395), this protein is tRNA N6-adenosine threonylcarbamoyltransferase.